The primary structure comprises 229 residues: Flagellar L-ring protein (229 aa).

The N-terminal stretch at 1–23 (MLSRLGARALVCLAGVAMLAASG) is a signal peptide. Cysteine 24 carries N-palmitoyl cysteine lipidation. Cysteine 24 carries the S-diacylglycerol cysteine lipid modification.

This sequence belongs to the FlgH family. As to quaternary structure, the basal body constitutes a major portion of the flagellar organelle and consists of four rings (L,P,S, and M) mounted on a central rod.

The protein localises to the cell outer membrane. The protein resides in the bacterial flagellum basal body. Its function is as follows. Assembles around the rod to form the L-ring and probably protects the motor/basal body from shearing forces during rotation. The protein is Flagellar L-ring protein of Cupriavidus taiwanensis (strain DSM 17343 / BCRC 17206 / CCUG 44338 / CIP 107171 / LMG 19424 / R1) (Ralstonia taiwanensis (strain LMG 19424)).